The primary structure comprises 1489 residues: FERM domain-containing protein C (1489 aa).

Polar residues-rich tracts occupy residues 59-79 (DTES…NFNS) and 103-118 (NSPL…STSI). Disordered stretches follow at residues 59–86 (DTES…HQHL), 103–197 (NSPL…PSTL), 252–271 (NSVQ…NNNN), and 277–312 (EQQQ…TPDS). Residues 131–153 (SSSSSSSDGDSNSSSDSSDNSSE) are compositionally biased toward low complexity. Residues 163–172 (HLHLHRHHRK) show a composition bias toward basic residues. The span at 181–195 (FESSSESSEQYGSPS) shows a compositional bias: low complexity. Positions 202 to 289 (ALKLEKIMQI…QEKQQQQQQH (88 aa)) form a coiled coil. The span at 277 to 287 (EQQQEKQQQQQ) shows a compositional bias: low complexity. Polar residues predominate over residues 303 to 312 (RSVSISTPDS). Residues 356 to 383 (IKVSKVLEEEMQLQQEFEKQEQLRHSAR) adopt a coiled-coil conformation. 3 disordered regions span residues 396–435 (NLQD…ENQN), 459–479 (VITP…KILT), and 508–569 (EDPL…TTTT). The span at 421 to 435 (ENVSNDNSSDNENQN) shows a compositional bias: low complexity. The span at 545-555 (TASSSSSPTLQ) shows a compositional bias: polar residues. Positions 556 to 569 (ATKTTTTTTTTTTT) are enriched in low complexity. Positions 637-934 (ILVHISLVDQ…GYKYFIQHDE (298 aa)) constitute an FERM domain. LRR repeat units lie at residues 1017–1040 (KVEL…LKDT), 1053–1075 (ENLN…AFEP), 1087–1110 (HLNL…IEKY), 1111–1133 (PNIE…VILR), 1167–1191 (NKTI…IFEG), 1196–1219 (SLSL…KFIK), 1254–1278 (SCHI…VIKG), 1282–1306 (NQTI…LCQS), 1339–1362 (NKTI…AIGT), 1367–1391 (NETL…ILNG), 1395–1418 (NSTI…SLAN), 1428–1450 (VITL…QLST), and 1451–1474 (NIPI…IKNA).

The protein is FERM domain-containing protein C (frmC) of Dictyostelium discoideum (Social amoeba).